The following is a 304-amino-acid chain: Ribonuclease Z (304 aa).

Residues His63, His65, Asp67, His68, His143, Asp213, and His271 each coordinate Zn(2+). Asp67 serves as the catalytic Proton acceptor.

This sequence belongs to the RNase Z family. Homodimer. It depends on Zn(2+) as a cofactor.

It carries out the reaction Endonucleolytic cleavage of RNA, removing extra 3' nucleotides from tRNA precursor, generating 3' termini of tRNAs. A 3'-hydroxy group is left at the tRNA terminus and a 5'-phosphoryl group is left at the trailer molecule.. In terms of biological role, zinc phosphodiesterase, which displays some tRNA 3'-processing endonuclease activity. Probably involved in tRNA maturation, by removing a 3'-trailer from precursor tRNA. The polypeptide is Ribonuclease Z (Porphyromonas gingivalis (strain ATCC 33277 / DSM 20709 / CIP 103683 / JCM 12257 / NCTC 11834 / 2561)).